The chain runs to 225 residues: Pathogenesis-related thaumatin-like protein 3.8 (225 aa).

Positions 1–26 (MAKVSDLALLLVAGMAISLYIQETGA) are cleaved as a signal peptide. Cystine bridges form between C35–C224, C76–C86, C91–C97, C139–C213, C144–C197, C152–C162, C166–C175, and C176–C184. N188 is a glycosylation site (N-linked (GlcNAc...) asparagine).

It belongs to the thaumatin family.

Functionally, may be involved in disease resistance. The protein is Pathogenesis-related thaumatin-like protein 3.8 of Cryptomeria japonica (Japanese cedar).